We begin with the raw amino-acid sequence, 358 residues long: Phospho-N-acetylmuramoyl-pentapeptide-transferase (358 aa).

A run of 10 helical transmembrane segments spans residues 26-46 (TIYA…WIIR), 71-91 (TPTM…LLWA), 93-113 (LTNV…LIGF), 134-154 (MFWQ…TPGF), 170-190 (LGIF…NAVN), 197-217 (GLAI…AYVA), 234-254 (AGEL…FLWF), 261-281 (VFMG…IAVL), 286-306 (ILLV…IFQV), and 335-355 (KIIV…ISTL).

The protein belongs to the glycosyltransferase 4 family. MraY subfamily. Requires Mg(2+) as cofactor.

It is found in the cell inner membrane. The enzyme catalyses UDP-N-acetyl-alpha-D-muramoyl-L-alanyl-gamma-D-glutamyl-meso-2,6-diaminopimeloyl-D-alanyl-D-alanine + di-trans,octa-cis-undecaprenyl phosphate = di-trans,octa-cis-undecaprenyl diphospho-N-acetyl-alpha-D-muramoyl-L-alanyl-D-glutamyl-meso-2,6-diaminopimeloyl-D-alanyl-D-alanine + UMP. It functions in the pathway cell wall biogenesis; peptidoglycan biosynthesis. Catalyzes the initial step of the lipid cycle reactions in the biosynthesis of the cell wall peptidoglycan: transfers peptidoglycan precursor phospho-MurNAc-pentapeptide from UDP-MurNAc-pentapeptide onto the lipid carrier undecaprenyl phosphate, yielding undecaprenyl-pyrophosphoryl-MurNAc-pentapeptide, known as lipid I. This is Phospho-N-acetylmuramoyl-pentapeptide-transferase from Trichlorobacter lovleyi (strain ATCC BAA-1151 / DSM 17278 / SZ) (Geobacter lovleyi).